We begin with the raw amino-acid sequence, 216 residues long: UPF0502 protein Smal_0052 (216 aa).

Belongs to the UPF0502 family.

The chain is UPF0502 protein Smal_0052 from Stenotrophomonas maltophilia (strain R551-3).